The chain runs to 96 residues: Small ribosomal subunit protein bS6 (96 aa).

It belongs to the bacterial ribosomal protein bS6 family.

Binds together with bS18 to 16S ribosomal RNA. In Streptococcus gordonii (strain Challis / ATCC 35105 / BCRC 15272 / CH1 / DL1 / V288), this protein is Small ribosomal subunit protein bS6.